The sequence spans 203 residues: MSRYTGPKWRISRRLGVSLSGTGKELSRRAYAPGDHGAGRRAKISEYGMQLREKQKLRFTYGLTERQFHALFNKAGKIRKGTHGTNFMILLEQRLDSLVYRLGFATTRQQARQLVNHGHIMVDGKRVDIPSYNVTPGQVVSVRDKSKNIVPIQAAVESVVARPQFVSFDAEKLEGSLVRLPEREELDADLNEALIVEYYNRLG.

In terms of domain architecture, S4 RNA-binding spans 93 to 153 (QRLDSLVYRL…DKSKNIVPIQ (61 aa)).

It belongs to the universal ribosomal protein uS4 family. In terms of assembly, part of the 30S ribosomal subunit. Contacts protein S5. The interaction surface between S4 and S5 is involved in control of translational fidelity.

In terms of biological role, one of the primary rRNA binding proteins, it binds directly to 16S rRNA where it nucleates assembly of the body of the 30S subunit. Its function is as follows. With S5 and S12 plays an important role in translational accuracy. The chain is Small ribosomal subunit protein uS4 from Leuconostoc citreum (strain KM20).